The primary structure comprises 404 residues: Cysteine desulfurase IscS (404 aa).

Pyridoxal 5'-phosphate contacts are provided by residues 75–76 (AT), asparagine 155, glutamine 183, and 203–205 (SAH). Residue lysine 206 is modified to N6-(pyridoxal phosphate)lysine. Threonine 243 contacts pyridoxal 5'-phosphate. The active-site Cysteine persulfide intermediate is the cysteine 328. Cysteine 328 provides a ligand contact to [2Fe-2S] cluster.

This sequence belongs to the class-V pyridoxal-phosphate-dependent aminotransferase family. NifS/IscS subfamily. Homodimer. Forms a heterotetramer with IscU, interacts with other sulfur acceptors. Requires pyridoxal 5'-phosphate as cofactor.

The protein localises to the cytoplasm. The catalysed reaction is (sulfur carrier)-H + L-cysteine = (sulfur carrier)-SH + L-alanine. It functions in the pathway cofactor biosynthesis; iron-sulfur cluster biosynthesis. Its function is as follows. Master enzyme that delivers sulfur to a number of partners involved in Fe-S cluster assembly, tRNA modification or cofactor biosynthesis. Catalyzes the removal of elemental sulfur atoms from cysteine to produce alanine. Functions as a sulfur delivery protein for Fe-S cluster synthesis onto IscU, an Fe-S scaffold assembly protein, as well as other S acceptor proteins. This Buchnera aphidicola subsp. Schizaphis graminum (strain Sg) protein is Cysteine desulfurase IscS.